Reading from the N-terminus, the 94-residue chain is Integration host factor subunit beta (94 aa).

The protein belongs to the bacterial histone-like protein family. As to quaternary structure, heterodimer of an alpha and a beta chain.

In terms of biological role, this protein is one of the two subunits of integration host factor, a specific DNA-binding protein that functions in genetic recombination as well as in transcriptional and translational control. This chain is Integration host factor subunit beta, found in Dechloromonas aromatica (strain RCB).